A 241-amino-acid polypeptide reads, in one-letter code: uncharacterized protein (241 aa).

A run of 5 helical transmembrane segments spans residues 7-27 (LIFLLFVIVVSYIFNGLWSVF), 37-57 (LFLLIAFHPQHLDGLIILLLI), 72-92 (IIALVGILLTIIKGVIKSGFG), 110-130 (INLVVFSILLTSVYVLGYVAF), and 138-158 (FGTLYTAFGGLALLGAGIKII).

The protein resides in the cell membrane. This is an uncharacterized protein from Methanocaldococcus jannaschii (strain ATCC 43067 / DSM 2661 / JAL-1 / JCM 10045 / NBRC 100440) (Methanococcus jannaschii).